A 533-amino-acid chain; its full sequence is Tyrosinase (533 aa).

The N-terminal stretch at 1–18 is a signal peptide; it reads MFLAVLYCLLWSFQISDG. The Lumenal, melanosome segment spans residues 19–476; it reads HFPRACASSK…YLEQASRIWP (458 aa). Residues Asn86, Asn111, and Asn161 are each glycosylated (N-linked (GlcNAc...) asparagine). 3 residues coordinate Cu cation: His180, His202, and His211. Asn230 and Asn337 each carry an N-linked (GlcNAc...) asparagine glycan. His363 and His367 together coordinate Cu cation. An N-linked (GlcNAc...) asparagine glycan is attached at Asn371. Residue His390 coordinates Cu cation. A helical membrane pass occupies residues 477 to 497; sequence WLLGAALVGAVIAAALSGLSS. Residues 498–533 lie on the Cytoplasmic side of the membrane; sequence RLCLQKKKKKKQPQEERQPLLMDKDDYHSLLYQSHL.

The protein belongs to the tyrosinase family. As to quaternary structure, forms an OPN3-dependent complex with DCT in response to blue light in melanocytes. Cu(2+) serves as cofactor. In terms of processing, glycosylated. As to expression, expressed in the skin.

Its subcellular location is the melanosome membrane. It localises to the melanosome. The catalysed reaction is 2 L-dopa + O2 = 2 L-dopaquinone + 2 H2O. It carries out the reaction L-tyrosine + O2 = L-dopaquinone + H2O. It catalyses the reaction 2 5,6-dihydroxyindole-2-carboxylate + O2 = 2 indole-5,6-quinone-2-carboxylate + 2 H2O. Functionally, this is a copper-containing oxidase that functions in the formation of pigments such as melanins and other polyphenolic compounds. Catalyzes the initial and rate limiting step in the cascade of reactions leading to melanin production from tyrosine. In addition to hydroxylating tyrosine to DOPA (3,4-dihydroxyphenylalanine), also catalyzes the oxidation of DOPA to DOPA-quinone, and possibly the oxidation of DHI (5,6-dihydroxyindole) to indole-5,6 quinone. The chain is Tyrosinase (Tyr) from Mus musculus (Mouse).